The following is a 144-amino-acid chain: 3-hydroxyacyl-[acyl-carrier-protein] dehydratase FabZ (144 aa).

His-48 is an active-site residue.

It belongs to the thioester dehydratase family. FabZ subfamily.

Its subcellular location is the cytoplasm. The enzyme catalyses a (3R)-hydroxyacyl-[ACP] = a (2E)-enoyl-[ACP] + H2O. Involved in unsaturated fatty acids biosynthesis. Catalyzes the dehydration of short chain beta-hydroxyacyl-ACPs and long chain saturated and unsaturated beta-hydroxyacyl-ACPs. This Bacillus thuringiensis (strain Al Hakam) protein is 3-hydroxyacyl-[acyl-carrier-protein] dehydratase FabZ.